A 474-amino-acid polypeptide reads, in one-letter code: tRNA-2-methylthio-N(6)-dimethylallyladenosine synthase (474 aa).

An MTTase N-terminal domain is found at 3 to 120 (KKLHIKTWGC…LPEMINAVRG (118 aa)). Residues C12, C49, C83, C157, C161, and C164 each coordinate [4Fe-4S] cluster. Residues 143-375 (RADGPTAFVS…QERINQQAMA (233 aa)) form the Radical SAM core domain. The TRAM domain maps to 378–441 (RRMLGTVQRI…TNSLRGKIVR (64 aa)).

This sequence belongs to the methylthiotransferase family. MiaB subfamily. In terms of assembly, monomer. The cofactor is [4Fe-4S] cluster.

It is found in the cytoplasm. The enzyme catalyses N(6)-dimethylallyladenosine(37) in tRNA + (sulfur carrier)-SH + AH2 + 2 S-adenosyl-L-methionine = 2-methylsulfanyl-N(6)-dimethylallyladenosine(37) in tRNA + (sulfur carrier)-H + 5'-deoxyadenosine + L-methionine + A + S-adenosyl-L-homocysteine + 2 H(+). Functionally, catalyzes the methylthiolation of N6-(dimethylallyl)adenosine (i(6)A), leading to the formation of 2-methylthio-N6-(dimethylallyl)adenosine (ms(2)i(6)A) at position 37 in tRNAs that read codons beginning with uridine. The protein is tRNA-2-methylthio-N(6)-dimethylallyladenosine synthase of Klebsiella pneumoniae (strain 342).